The primary structure comprises 1140 residues: MARYTQRPENALKRANEFIEVGKPLRALDTLQEVFRNKRWNYAYSETVIEPLMFKYLYLCVELKKSHIAKEGLFQYRNMFQLVNVNSLENVIRGYLKMAEEHTEAAQAQSSAAVAVLELDDLDNIATPESILMSAVCGEDAQDRSDRTILLPWVKFLWESYCQCLELLRVNTHCETLYHDIARMAFQFCLKYNRKSEFRRLCDKLRKHLEDICKSSNQTTGVSINKVETQQLCLDTRLYLLDSAIQMELWQEAYKAIEDIHGLMALSKKTPVPKTMANYYQKLAMVFSKAGNQLFHAAALLKLFQLTRELKKNLTKDDLQRMAAHVLLATLSIPLPSAHPEFDRFIEADKSPLEKAQKLAILLGLPQPPTRVSLIREVVRLNVPQLVSEDFRNLYNWLEVDFNPLNLCQRIQSVVDTIESGPAETSLLTPYIQSLKDVTIMRLIRQISQVYESIEFKRLLELASFCNVFELEKLLVESVRHNDMQIRIDHQKHCIYFGTDLTESQREYRPDGPTLQSMPSEQIRSQLVNMSTVLTRAVSIVYPDREREQRAKLRTQMVHHYHEIKDREHQRILQRQKIIEDRKEFIEKQNNAREEEEARRQEEESRKAKLAEQKRLEQEQEERERKRHQNEIQAIREKSLKEKVQQISQTAHGKKMLSKLDEEGIKKLDAEQIAKRENEELQREAKELQSKLKSQEKKIDYFERAKRLEEIPLFEKYLTEKQVKDKEFWEATEQTRIENAITERKDAVSQQERLKRMYPDRDEYLEALKKERASLYLEKVEKFEIALEVERKKRLADRVIRRREERRQAHLREKEEERLRKEEEIRMAQAAEERAAAEARRLEREAEDEKRRAQYEKQRAKEEEAERKIKEDRDRLAREVAVERERSDKERDTWRPRGDRPEGRPSAAAGGGGASEWRRPAPTADRADRDRGADRDRGADRDRGADRDRGADRERGADRDRKDNEAGGASDSWRVRREPDSQRNAAPKDGGGSSGGAQPSRDDKWRRGGDRERDRDFRNDGQGPRRGGDREDDRDRGGFRRNDGPRRNEEQQRETGGNWRDAPRQSDNRDNRRPAGGDRRDRDRDVRGAGPKEGGGGGGGNWRTAPAPRDEKPTTKQRDQPQDKENKAGDDGEWTSVKRR.

The region spanning Leu319–Thr502 is the PCI domain. Composition is skewed to basic and acidic residues over residues Asn590 to Glu624, Arg826 to Gly903, Asp925 to Glu965, Ser1000 to Asn1019, Arg1026 to Arg1053, and Asp1061 to Arg1087. Disordered stretches follow at residues Asn590–Ile632 and Arg826–Arg1140. The span at Pro1091–Asn1101 shows a compositional bias: gly residues. A compositionally biased stretch (basic and acidic residues) spans Pro1108–Asp1130.

Belongs to the eIF-3 subunit A family. As to quaternary structure, component of the eukaryotic translation initiation factor 3 (eIF-3) complex. The eIF-3 complex interacts with pix.

The protein localises to the cytoplasm. Its function is as follows. RNA-binding component of the eukaryotic translation initiation factor 3 (eIF-3) complex, which is involved in protein synthesis of a specialized repertoire of mRNAs and, together with other initiation factors, stimulates binding of mRNA and methionyl-tRNAi to the 40S ribosome. The eIF-3 complex specifically targets and initiates translation of a subset of mRNAs involved in cell proliferation. This is Eukaryotic translation initiation factor 3 subunit A from Drosophila willistoni (Fruit fly).